The sequence spans 360 residues: WD repeat domain phosphoinositide-interacting protein 4 (360 aa).

WD repeat units follow at residues 1–34, 40–84, 92–128, 133–174, 183–222, 227–266, and 284–329; these read MTQQ…IYNV, KGHL…IWDD, KEKL…VYSF, RKLF…LVDL, SAPF…LFDT, KLVE…IFAL, and GPMI…ICVD. Residues 231–234 carry the L/FRRG motif motif; it reads LRRG.

The protein belongs to the WD repeat PROPPIN family. As to quaternary structure, interacts with WIPI1. Interacts with WIPI2. Interacts with ATG2A and ATG2B. Interacts with ULK1. May interact with the PRKAA1, PRKAA2, PRKAB1 and PRKAG1 subunits of the AMPK kinase. May interact with NUDC. As to expression, ubiquitously expressed, with high expression in skeletal muscle and heart. Weakly expressed in liver and placenta. Expression is down-regulated in pancreatic and in kidney tumors.

The protein resides in the preautophagosomal structure. It localises to the cytoplasm. With respect to regulation, activated upon amino-acid starvation. Its function is as follows. Component of the autophagy machinery that controls the major intracellular degradation process by which cytoplasmic materials are packaged into autophagosomes and delivered to lysosomes for degradation. Binds phosphatidylinositol 3-phosphate (PtdIns3P). Activated by the STK11/AMPK signaling pathway upon starvation, WDR45 is involved in autophagosome assembly downstream of WIPI2, regulating the size of forming autophagosomes. Together with WIPI1, promotes ATG2 (ATG2A or ATG2B)-mediated lipid transfer by enhancing ATG2-association with phosphatidylinositol 3-monophosphate (PI3P)-containing membranes. Probably recruited to membranes through its PtdIns3P activity. The sequence is that of WD repeat domain phosphoinositide-interacting protein 4 (WDR45) from Homo sapiens (Human).